A 362-amino-acid polypeptide reads, in one-letter code: Probable branched-chain-amino-acid aminotransferase (362 aa).

Lys-202 bears the N6-(pyridoxal phosphate)lysine mark.

It belongs to the class-IV pyridoxal-phosphate-dependent aminotransferase family. Pyridoxal 5'-phosphate serves as cofactor.

The catalysed reaction is L-leucine + 2-oxoglutarate = 4-methyl-2-oxopentanoate + L-glutamate. It carries out the reaction L-isoleucine + 2-oxoglutarate = (S)-3-methyl-2-oxopentanoate + L-glutamate. The enzyme catalyses L-valine + 2-oxoglutarate = 3-methyl-2-oxobutanoate + L-glutamate. It participates in amino-acid biosynthesis; L-isoleucine biosynthesis; L-isoleucine from 2-oxobutanoate: step 4/4. Its pathway is amino-acid biosynthesis; L-leucine biosynthesis; L-leucine from 3-methyl-2-oxobutanoate: step 4/4. The protein operates within amino-acid biosynthesis; L-valine biosynthesis; L-valine from pyruvate: step 4/4. Functionally, acts on leucine, isoleucine and valine. This chain is Probable branched-chain-amino-acid aminotransferase (ilvE), found in Streptomyces coelicolor (strain ATCC BAA-471 / A3(2) / M145).